Consider the following 623-residue polypeptide: Glutamine--fructose-6-phosphate aminotransferase [isomerizing] (623 aa).

C2 acts as the Nucleophile; for GATase activity in catalysis. The region spanning 2–228 (CGIVGYIGQA…NDQVVTITAD (227 aa)) is the Glutamine amidotransferase type-2 domain. SIS domains lie at 295–435 (IDES…LRGN) and 468–613 (LGRS…VDQP). K618 (for Fru-6P isomerization activity) is an active-site residue.

Homodimer.

The protein resides in the cytoplasm. It carries out the reaction D-fructose 6-phosphate + L-glutamine = D-glucosamine 6-phosphate + L-glutamate. In terms of biological role, catalyzes the first step in hexosamine metabolism, converting fructose-6P into glucosamine-6P using glutamine as a nitrogen source. In Corynebacterium efficiens (strain DSM 44549 / YS-314 / AJ 12310 / JCM 11189 / NBRC 100395), this protein is Glutamine--fructose-6-phosphate aminotransferase [isomerizing].